Reading from the N-terminus, the 908-residue chain is MVCEGKRSTSCPCFFLLTAKFYWILTMMQRTHSQEYAHSIRLDGDIILGGLFPVHAKGERGVPCGDLKKEKGIHRLEAMLYAIDQINKDPDLLSNITLGVRILDTCSRDTYALEQSLTFVQALIEKDASDVKCANGDPPIFTKPDKISGVIGAAASSVSIMVANILRLFKIPQISYASTAPELSDNTRYDFFSRVVPPDSYQAQAMVDIVTALGWNYVSTLASEGNYGESGVEAFTQISREIGGVCIAQSQKIPREPRPGEFEKIIKRLLETPNARAVIMFANEDDIRRILEAAKKLNQSGHFLWIGSDSWGSKIAPVYQQEEIAEGAVTILPKRASIDGFDRYFRSRTLANNRRNVWFAEFWEENFGCKLGSHGKRNSHIKKCTGLERIARDSSYEQEGKVQFVIDAVYSMAYALHNMHKELCPGYIGLCPRMVTIDGKELLGYIRAVNFNGSAGTPVTFNENGDAPGRYDIFQYQINNKSTEYKIIGHWTNQLHLKVEDMQWANREHTHPASVCSLPCKPGERKKTVKGVPCCWHCERCEGYNYQVDELSCELCPLDQRPNINRTGCQRIPIIKLEWHSPWAVVPVFIAILGIIATTFVIVTFVRYNDTPIVRASGRELSYVLLTGIFLCYSITFLMIAAPDTIICSFRRIFLGLGMCFSYAALLTKTNRIHRIFEQGKKSVTAPKFISPASQLVITFSLISVQLLGVFVWFVVDPPHTIIDYGEQRTLDPENARGVLKCDISDLSLICSLGYSILLMVTCTVYAIKTRGVPETFNEAKPIGFTMYTTCIIWLAFIPIFFGTAQSAEKMYIQTTTLTVSMSLSASVSLGMLYMPKVYIIIFHPEQNVQKRKRSFKAVVTAATMQSKLIQKGNDRPNGEVKSELCESLETNTSSTKTTYISYSNHSI.

Positions 1–33 (MVCEGKRSTSCPCFFLLTAKFYWILTMMQRTHS) are cleaved as a signal peptide. Over 34–583 (QEYAHSIRLD…IIKLEWHSPW (550 aa)) the chain is Extracellular. Residues Cys-64 and Cys-106 are joined by a disulfide bond. Residue Asn-95 is glycosylated (N-linked (GlcNAc...) asparagine). L-glutamate contacts are provided by residues Ser-156, 177–179 (AST), and Tyr-227. Intrachain disulfides connect Cys-246–Cys-534, Cys-369–Cys-384, Cys-424–Cys-431, Cys-516–Cys-535, Cys-520–Cys-538, Cys-541–Cys-553, and Cys-556–Cys-569. N-linked (GlcNAc...) asparagine glycosylation is present at Asn-298. Residue Asp-309 participates in L-glutamate binding. Lys-401 is a binding site for L-glutamate. N-linked (GlcNAc...) asparagine glycans are attached at residues Asn-452 and Asn-480. An N-linked (GlcNAc...) asparagine glycan is attached at Asn-565. A helical transmembrane segment spans residues 584-608 (AVVPVFIAILGIIATTFVIVTFVRY). The Cytoplasmic portion of the chain corresponds to 609-620 (NDTPIVRASGRE). The chain crosses the membrane as a helical span at residues 621–641 (LSYVLLTGIFLCYSITFLMIA). The Extracellular portion of the chain corresponds to 642 to 647 (APDTII). Residues 648-668 (CSFRRIFLGLGMCFSYAALLT) traverse the membrane as a helical segment. Over 669–695 (KTNRIHRIFEQGKKSVTAPKFISPASQ) the chain is Cytoplasmic. A helical membrane pass occupies residues 696–716 (LVITFSLISVQLLGVFVWFVV). Residues 717-746 (DPPHTIIDYGEQRTLDPENARGVLKCDISD) lie on the Extracellular side of the membrane. A helical membrane pass occupies residues 747-768 (LSLICSLGYSILLMVTCTVYAI). At 769-781 (KTRGVPETFNEAK) the chain is on the cytoplasmic side. Residues 782–803 (PIGFTMYTTCIIWLAFIPIFFG) traverse the membrane as a helical segment. At 804–818 (TAQSAEKMYIQTTTL) the chain is on the extracellular side. The helical transmembrane segment at 819–843 (TVSMSLSASVSLGMLYMPKVYIIIF) threads the bilayer. Topologically, residues 844–908 (HPEQNVQKRK…TYISYSNHSI (65 aa)) are cytoplasmic. Lys-882 participates in a covalent cross-link: Glycyl lysine isopeptide (Lys-Gly) (interchain with G-Cter in SUMO1).

It belongs to the G-protein coupled receptor 3 family. In terms of assembly, interacts with PICK1. Strongly expressed in olfactory bulb, accessory olfactory bulb, and mammillary body. Weaker expression in the retina, and in scattered cells in the cortex and hindbrain.

Its subcellular location is the cell membrane. In terms of biological role, G-protein coupled receptor for glutamate. Ligand binding causes a conformation change that triggers signaling via guanine nucleotide-binding proteins (G proteins) and modulates the activity of down-stream effectors. Signaling inhibits adenylate cyclase activity. This is Metabotropic glutamate receptor 8 (Grm8) from Mus musculus (Mouse).